A 95-amino-acid polypeptide reads, in one-letter code: Sec-independent protein translocase protein TatA (95 aa).

Residues 1–21 (MFGRLGAPEIILILVVIILLF) traverse the membrane as a helical segment. The segment covering 44–55 (AKAMKSEAKADD) has biased composition (basic and acidic residues). A disordered region spans residues 44–95 (AKAMKSEAKADDAAPADPPNPEQSAAQRTIQAAPGDVTSSRPVTEPTDTTKR).

The protein belongs to the TatA/E family. The Tat system comprises two distinct complexes: a TatABC complex, containing multiple copies of TatA, TatB and TatC subunits, and a separate TatA complex, containing only TatA subunits. Substrates initially bind to the TatABC complex, which probably triggers association of the separate TatA complex to form the active translocon.

It is found in the cell membrane. Its function is as follows. Part of the twin-arginine translocation (Tat) system that transports large folded proteins containing a characteristic twin-arginine motif in their signal peptide across membranes. TatA could form the protein-conducting channel of the Tat system. The protein is Sec-independent protein translocase protein TatA of Streptomyces coelicolor (strain ATCC BAA-471 / A3(2) / M145).